Consider the following 252-residue polypeptide: N-glycosylase/DNA lyase (252 aa).

8-oxoguanine contacts are provided by Gln32, Ser60, and Trp71. A helix-hairpin-helix region spans residues 129 to 193 (KTYYSDMEKL…KDSRIEKYTL (65 aa)). Lys153 serves as the catalytic Schiff-base intermediate with DNA. 8-oxoguanine-binding residues include Phe157 and Pro183. Asp185 is an active-site residue. Positions 219 and 223 each coordinate 8-oxoguanine.

It belongs to the archaeal N-glycosylase/DNA lyase (AGOG) family.

The enzyme catalyses 2'-deoxyribonucleotide-(2'-deoxyribose 5'-phosphate)-2'-deoxyribonucleotide-DNA = a 3'-end 2'-deoxyribonucleotide-(2,3-dehydro-2,3-deoxyribose 5'-phosphate)-DNA + a 5'-end 5'-phospho-2'-deoxyribonucleoside-DNA + H(+). DNA repair enzyme that is part of the base excision repair (BER) pathway; protects from oxidative damage by removing the major product of DNA oxidation, 8-oxoguanine (GO), from single- and double-stranded DNA substrates. The polypeptide is N-glycosylase/DNA lyase (Methanococcus maripaludis (strain DSM 14266 / JCM 13030 / NBRC 101832 / S2 / LL)).